The primary structure comprises 220 residues: uncharacterized protein (220 aa).

Positions 1-50 (MTDDVRDVNTETTDATEVAEIDSAAGEAGDSATEAFDTDSATESTAQKGQ) are disordered. A compositionally biased stretch (polar residues) spans 39 to 48 (DSATESTAQK). Residues 65–85 (VPVILILLMLISGGATGWLYL) form a helical membrane-spanning segment.

This sequence to M.tuberculosis Rv1363c.

It is found in the membrane. This is an uncharacterized protein from Mycobacterium tuberculosis (strain CDC 1551 / Oshkosh).